Here is a 139-residue protein sequence, read N- to C-terminus: Probable DNA-binding protein (139 aa).

The tract at residues 97-139 (DEPSREASPDLGAAGAELEDESAQAGAVQGPETLRSQVLRART) is disordered.

The sequence is that of Probable DNA-binding protein from Homo sapiens (Human).